Consider the following 542-residue polypeptide: Probable protein kinase UbiB (542 aa).

The Protein kinase domain occupies D123–M505. ATP is bound by residues L129–V137 and K156. D291 (proton acceptor) is an active-site residue. The helical transmembrane segment at I506–L526 threads the bilayer.

The protein belongs to the ABC1 family. UbiB subfamily.

It localises to the cell inner membrane. The protein operates within cofactor biosynthesis; ubiquinone biosynthesis [regulation]. Functionally, is probably a protein kinase regulator of UbiI activity which is involved in aerobic coenzyme Q (ubiquinone) biosynthesis. The protein is Probable protein kinase UbiB of Haemophilus ducreyi (strain 35000HP / ATCC 700724).